The primary structure comprises 690 residues: Elongation factor G (690 aa).

Residues 8–283 (EDYRNFGIMA…AVVDYLPSPV (276 aa)) form the tr-type G domain. Residues 17–24 (AHIDAGKT), 81–85 (DTPGH), and 135–138 (NKMD) contribute to the GTP site.

This sequence belongs to the TRAFAC class translation factor GTPase superfamily. Classic translation factor GTPase family. EF-G/EF-2 subfamily.

The protein localises to the cytoplasm. Catalyzes the GTP-dependent ribosomal translocation step during translation elongation. During this step, the ribosome changes from the pre-translocational (PRE) to the post-translocational (POST) state as the newly formed A-site-bound peptidyl-tRNA and P-site-bound deacylated tRNA move to the P and E sites, respectively. Catalyzes the coordinated movement of the two tRNA molecules, the mRNA and conformational changes in the ribosome. The chain is Elongation factor G from Rhodopseudomonas palustris (strain BisA53).